We begin with the raw amino-acid sequence, 690 residues long: Polyribonucleotide nucleotidyltransferase (690 aa).

Residues Asp482 and Asp488 each contribute to the Mg(2+) site. One can recognise a KH domain in the interval 549–608; the sequence is PRIITIQINPDRIRDVIGPGGKVIRALTEETGATIDIQDNGTVTIASVDGEAGAAAKRRI. Residues 618 to 686 enclose the S1 motif domain; it reads DTIYDGKVAK…RQGKIKLSMK (69 aa).

Belongs to the polyribonucleotide nucleotidyltransferase family. In terms of assembly, component of the RNA degradosome, which is a multiprotein complex involved in RNA processing and mRNA degradation. It depends on Mg(2+) as a cofactor.

It localises to the cytoplasm. The catalysed reaction is RNA(n+1) + phosphate = RNA(n) + a ribonucleoside 5'-diphosphate. Involved in mRNA degradation. Catalyzes the phosphorolysis of single-stranded polyribonucleotides processively in the 3'- to 5'-direction. This Acidithiobacillus ferrooxidans (strain ATCC 23270 / DSM 14882 / CIP 104768 / NCIMB 8455) (Ferrobacillus ferrooxidans (strain ATCC 23270)) protein is Polyribonucleotide nucleotidyltransferase.